Reading from the N-terminus, the 207-residue chain is Large ribosomal subunit protein uL4 (207 aa).

The tract at residues 56 to 77 (FVSGGGKKPWRQKGTGRARHGS) is disordered. A compositionally biased stretch (basic residues) spans 63–77 (KPWRQKGTGRARHGS).

The protein belongs to the universal ribosomal protein uL4 family. Part of the 50S ribosomal subunit.

Its function is as follows. One of the primary rRNA binding proteins, this protein initially binds near the 5'-end of the 23S rRNA. It is important during the early stages of 50S assembly. It makes multiple contacts with different domains of the 23S rRNA in the assembled 50S subunit and ribosome. Forms part of the polypeptide exit tunnel. The protein is Large ribosomal subunit protein uL4 of Phytoplasma australiense.